Reading from the N-terminus, the 258-residue chain is MLAKRIIPCLDVRDGQVVKGIQFRHHEIIGDIVPLAQRYATEGADELVFYDITASSDGRVVDKSWITKVAEVIDIPFCVAGGIKTVEDAGQILSFGADKISINSPALTDPTLITRLADRYGVQCIVVGIDTWFDESTGRYQVYQFTGDEKRTKATQWQTLNWVKEAQHRGAGEIVLNMMNQDGVRNGYDLTQLKQVRDVCHVPLIASGGAGAPEHFLDAFKQANVDGALAASVFHKHIINICELKQYLSQQGVEIRTC.

Residues D11 and D130 contribute to the active site.

This sequence belongs to the HisA/HisF family. In terms of assembly, heterodimer of HisH and HisF.

It is found in the cytoplasm. The enzyme catalyses 5-[(5-phospho-1-deoxy-D-ribulos-1-ylimino)methylamino]-1-(5-phospho-beta-D-ribosyl)imidazole-4-carboxamide + L-glutamine = D-erythro-1-(imidazol-4-yl)glycerol 3-phosphate + 5-amino-1-(5-phospho-beta-D-ribosyl)imidazole-4-carboxamide + L-glutamate + H(+). The protein operates within amino-acid biosynthesis; L-histidine biosynthesis; L-histidine from 5-phospho-alpha-D-ribose 1-diphosphate: step 5/9. Its function is as follows. IGPS catalyzes the conversion of PRFAR and glutamine to IGP, AICAR and glutamate. The HisF subunit catalyzes the cyclization activity that produces IGP and AICAR from PRFAR using the ammonia provided by the HisH subunit. The sequence is that of Imidazole glycerol phosphate synthase subunit HisF from Photorhabdus laumondii subsp. laumondii (strain DSM 15139 / CIP 105565 / TT01) (Photorhabdus luminescens subsp. laumondii).